The chain runs to 410 residues: Multifunctional CCA protein (410 aa).

ATP contacts are provided by glycine 8 and arginine 11. CTP-binding residues include glycine 8 and arginine 11. 2 residues coordinate Mg(2+): aspartate 21 and aspartate 23. ATP is bound by residues arginine 91, arginine 138, and arginine 141. The CTP site is built by arginine 91, arginine 138, and arginine 141. Residues 229 to 347 (TGIHQEMVSD…AQLALVCEAD (119 aa)) form the HD domain.

It belongs to the tRNA nucleotidyltransferase/poly(A) polymerase family. Bacterial CCA-adding enzyme type 1 subfamily. As to quaternary structure, monomer. Can also form homodimers and oligomers. It depends on Mg(2+) as a cofactor. Ni(2+) serves as cofactor.

It catalyses the reaction a tRNA precursor + 2 CTP + ATP = a tRNA with a 3' CCA end + 3 diphosphate. The enzyme catalyses a tRNA with a 3' CCA end + 2 CTP + ATP = a tRNA with a 3' CCACCA end + 3 diphosphate. Its function is as follows. Catalyzes the addition and repair of the essential 3'-terminal CCA sequence in tRNAs without using a nucleic acid template. Adds these three nucleotides in the order of C, C, and A to the tRNA nucleotide-73, using CTP and ATP as substrates and producing inorganic pyrophosphate. tRNA 3'-terminal CCA addition is required both for tRNA processing and repair. Also involved in tRNA surveillance by mediating tandem CCA addition to generate a CCACCA at the 3' terminus of unstable tRNAs. While stable tRNAs receive only 3'-terminal CCA, unstable tRNAs are marked with CCACCA and rapidly degraded. The sequence is that of Multifunctional CCA protein from Xanthomonas oryzae pv. oryzae (strain MAFF 311018).